A 271-amino-acid polypeptide reads, in one-letter code: MTKNQNFIETKEYKRFAEFCDACIKYQYIGICYGQPGVGKTLSSRYYTNWNTIEKQVNHRGWEDLASKTTDDILSVNKIFYTRPAEKQTRLSNDLYSISASIDLGQKLHIVNKYGHDHSKHYSDMFKYIDLIIVDEIDRLKVQHLEQLRAIYDEHNLAMIFIGMPGIEKKLSRYPQLYSRIGFAHEFDNLSKDETHHILEYKWQDLGFDLKLEDFTDYEAITTIIKITKGNFRLIHRLFAQIDRIMDINGLDKISTEVVETARDSLVIGIR.

34–41 (GQPGVGKT) provides a ligand contact to ATP.

The chain is Potential ATP-binding protein from Staphylococcus aureus.